The sequence spans 140 residues: Large ribosomal subunit protein uL14 (140 aa).

It belongs to the universal ribosomal protein uL14 family.

The protein is Large ribosomal subunit protein uL14 (rpl-23) of Caenorhabditis elegans.